A 664-amino-acid chain; its full sequence is tRNA uridine 5-carboxymethylaminomethyl modification enzyme MnmG (664 aa).

FAD contacts are provided by residues 14–19 (GGGHSG), V126, and S183. Position 277–291 (277–291 (GPRYCPSIEDKIDRF)) interacts with NAD(+). An FAD-binding site is contributed by Q374.

This sequence belongs to the MnmG family. As to quaternary structure, homodimer. Heterotetramer of two MnmE and two MnmG subunits. It depends on FAD as a cofactor.

The protein resides in the cytoplasm. Functionally, NAD-binding protein involved in the addition of a carboxymethylaminomethyl (cmnm) group at the wobble position (U34) of certain tRNAs, forming tRNA-cmnm(5)s(2)U34. The polypeptide is tRNA uridine 5-carboxymethylaminomethyl modification enzyme MnmG (Salinibacter ruber (strain DSM 13855 / M31)).